The sequence spans 596 residues: Transcription factor IIIB 70 kDa subunit (596 aa).

A TFIIB-type zinc finger spans residues 1–33; the sequence is MPVCKNCHGTEFERDLSNANNDLVCKACGVVSE. The Zn(2+) site is built by C4, C7, C25, and C28. Tandem repeats lie at residues 90–166 and 185–264. Disordered regions lie at residues 363–421 and 509–534; these read GENI…NESG and IATGNTSVKKKRTRRRNNTRSDEPTK. Basic and acidic residues predominate over residues 365–375; the sequence is NIYHEGSENET. Phosphoserine is present on residues S381 and S384. The segment covering 388–421 has biased composition (basic and acidic residues); sequence EHVEGEDKETEGTEEKVKKVKTKTSEEKKENESG. Basic residues predominate over residues 516–526; it reads VKKKRTRRRNN.

Belongs to the TFIIB family. TFIIIB comprises the TATA-binding protein (TBP), the B-related factor (BRF) and the B' component (TFC5).

It is found in the nucleus. Functionally, general activator of RNA polymerase III transcription. Interacts with TBP. Binds to Pol III subunit C34 and to the TAU135 component of TFIIIC. The protein is Transcription factor IIIB 70 kDa subunit (BRF1) of Saccharomyces cerevisiae (strain ATCC 204508 / S288c) (Baker's yeast).